Here is a 911-residue protein sequence, read N- to C-terminus: Gag-Pro polyprotein (911 aa).

The propeptide occupies 101–161 (AAVAQTEEIL…TKKPKRFPVL (61 aa)). Composition is skewed to polar residues over residues 113–125 (NSQT…SQNP) and 140–152 (KSSS…LSST). A disordered region spans residues 113 to 178 (NSQTDLTKTS…DPEDPNPSEV (66 aa)). Positions 202 to 205 (PPPY) match the PPXY motif motif. A PTAP/PSAP motif motif is present at residues 210 to 213 (PSAP). Residues 216–257 (MAVVNPKEELKEKIAQLEEQIKLEELHQALISKLQKLKTGNE) adopt a coiled-coil conformation. Residues 260–279 (THPDTAGGLSRTPHWPGQHI) are disordered. 2 consecutive CCHC-type zinc fingers follow at residues 547–564 (GCCF…NCHE) and 576–593 (GLCP…ECKS). The disordered stretch occupies residues 592–626 (KSKTDNQGNPIPPHQGNRVEGPAPGPETSLWGSQL). One can recognise a Peptidase A2 domain in the interval 780 to 856 (FTGLIDTGAD…LPVNLWGRDL (77 aa)). Aspartate 785 acts as the Protease; shared with dimeric partner in catalysis. The G-patch domain occupies 867-911 (PNDIVTAQMLAQGYSPGKGLGKKENGILHPIPNQGQSNKKGFGNF).

As to quaternary structure, homodimer. Interacts with the reverse transcriptase/ribonuclease H. In terms of assembly, homotrimer. Released by autocatalytic processing. The protease can undergo further autoprocessing to yield 2 shorter but enzymatically active forms of 12 kDa and 13 kDa without the GDP domain. the 12 kDa form is monomeric. Post-translationally, myristoylated. Myristoylation of the matrix (MA) domain mediates the transport and binding of Gag polyproteins to the host plasma membrane and is required for the assembly of viral particles. In terms of processing, specific enzymatic cleavages in vivo yield mature proteins.

The protein localises to the virion. It catalyses the reaction dUTP + H2O = dUMP + diphosphate + H(+). In terms of biological role, matrix protein. Nucleocapsid protein p14: Nucleocapsid protein. Functionally, capsid protein. Its function is as follows. The aspartyl protease mediates proteolytic cleavages of Gag and Gag-Pol polyproteins during or shortly after the release of the virion from the plasma membrane. Cleavages take place as an ordered, step-wise cascade to yield mature proteins. This process is called maturation. Displays maximal activity during the budding process just prior to particle release from the cell. In terms of biological role, enhances the activity of the reverse transcriptase. May be part of the mature RT. This chain is Gag-Pro polyprotein (gag-pro), found in Mason-Pfizer monkey virus (MPMV).